The sequence spans 301 residues: Methionyl-tRNA formyltransferase (301 aa).

Residue Ser-109 to Pro-112 participates in (6S)-5,6,7,8-tetrahydrofolate binding.

This sequence belongs to the Fmt family.

The catalysed reaction is L-methionyl-tRNA(fMet) + (6R)-10-formyltetrahydrofolate = N-formyl-L-methionyl-tRNA(fMet) + (6S)-5,6,7,8-tetrahydrofolate + H(+). In terms of biological role, attaches a formyl group to the free amino group of methionyl-tRNA(fMet). The formyl group appears to play a dual role in the initiator identity of N-formylmethionyl-tRNA by promoting its recognition by IF2 and preventing the misappropriation of this tRNA by the elongation apparatus. This Ruegeria pomeroyi (strain ATCC 700808 / DSM 15171 / DSS-3) (Silicibacter pomeroyi) protein is Methionyl-tRNA formyltransferase.